Reading from the N-terminus, the 360-residue chain is Protein RecA (360 aa).

77–84 (GPESSGKT) contacts ATP.

It belongs to the RecA family.

The protein resides in the cytoplasm. Its function is as follows. Can catalyze the hydrolysis of ATP in the presence of single-stranded DNA, the ATP-dependent uptake of single-stranded DNA by duplex DNA, and the ATP-dependent hybridization of homologous single-stranded DNAs. It interacts with LexA causing its activation and leading to its autocatalytic cleavage. This is Protein RecA from Chelativorans sp. (strain BNC1).